A 254-amino-acid polypeptide reads, in one-letter code: Phosphoribosylaminoimidazole-succinocarboxamide synthase (254 aa).

Belongs to the SAICAR synthetase family.

It catalyses the reaction 5-amino-1-(5-phospho-D-ribosyl)imidazole-4-carboxylate + L-aspartate + ATP = (2S)-2-[5-amino-1-(5-phospho-beta-D-ribosyl)imidazole-4-carboxamido]succinate + ADP + phosphate + 2 H(+). It functions in the pathway purine metabolism; IMP biosynthesis via de novo pathway; 5-amino-1-(5-phospho-D-ribosyl)imidazole-4-carboxamide from 5-amino-1-(5-phospho-D-ribosyl)imidazole-4-carboxylate: step 1/2. The polypeptide is Phosphoribosylaminoimidazole-succinocarboxamide synthase (Sinorhizobium medicae (strain WSM419) (Ensifer medicae)).